A 336-amino-acid chain; its full sequence is Mediator of RNA polymerase II transcription subunit 4 (336 aa).

Disordered stretches follow at residues 1-45 (MNST…SNVV) and 59-85 (NVEE…QDEA). The stretch at 154–192 (QQAAQTIAALERVSEGLDDKIRDMIRKLAECRRELRNYQ) forms a coiled coil. Residues 281–336 (PVANGVAQNHNNGYAMERRLSTGYGSDNDGDTNMNGRSGLAGLDIFDDDDDDDDDD) form a disordered region. A compositionally biased stretch (acidic residues) spans 325 to 336 (IFDDDDDDDDDD).

It belongs to the Mediator complex subunit 4 family. In terms of assembly, component of the Mediator complex.

The protein resides in the nucleus. Functionally, component of the Mediator complex, a coactivator involved in the regulated transcription of nearly all RNA polymerase II-dependent genes. Mediator functions as a bridge to convey information from gene-specific regulatory proteins to the basal RNA polymerase II transcription machinery. Mediator is recruited to promoters by direct interactions with regulatory proteins and serves as a scaffold for the assembly of a functional preinitiation complex with RNA polymerase II and the general transcription factors. The sequence is that of Mediator of RNA polymerase II transcription subunit 4 (MED4) from Yarrowia lipolytica (strain CLIB 122 / E 150) (Yeast).